The chain runs to 1031 residues: Telomerase reverse transcriptase (1031 aa).

In terms of domain architecture, Reverse transcriptase spans 498–852 (KEVEEWKKSL…DYCDWIGISI (355 aa)). Asp-603, Asp-781, and Asp-782 together coordinate Mg(2+).

The protein belongs to the reverse transcriptase family. Telomerase subfamily. As to quaternary structure, component of the telomerase holoenzyme complex composed minimally of the catalytic subunit p123 and the telomerase RNA template component.

The protein resides in the nucleus. The protein localises to the chromosome. Its subcellular location is the telomere. It carries out the reaction DNA(n) + a 2'-deoxyribonucleoside 5'-triphosphate = DNA(n+1) + diphosphate. Telomerase is a ribonucleoprotein enzyme essential for the replication of chromosome termini in most eukaryotes. It elongates telomeres. It is a reverse transcriptase that adds simple sequence repeats to chromosome ends by copying a template sequence within the RNA component of the enzyme. The chain is Telomerase reverse transcriptase from Euplotes aediculatus (Ciliate).